The primary structure comprises 397 residues: Arginine biosynthesis bifunctional protein ArgJ (397 aa).

Substrate-binding residues include threonine 147, lysine 173, threonine 184, glutamate 270, asparagine 392, and threonine 397. The Nucleophile role is filled by threonine 184.

This sequence belongs to the ArgJ family. In terms of assembly, heterotetramer of two alpha and two beta chains.

The protein resides in the cytoplasm. The catalysed reaction is N(2)-acetyl-L-ornithine + L-glutamate = N-acetyl-L-glutamate + L-ornithine. It carries out the reaction L-glutamate + acetyl-CoA = N-acetyl-L-glutamate + CoA + H(+). Its pathway is amino-acid biosynthesis; L-arginine biosynthesis; L-ornithine and N-acetyl-L-glutamate from L-glutamate and N(2)-acetyl-L-ornithine (cyclic): step 1/1. It participates in amino-acid biosynthesis; L-arginine biosynthesis; N(2)-acetyl-L-ornithine from L-glutamate: step 1/4. Catalyzes two activities which are involved in the cyclic version of arginine biosynthesis: the synthesis of N-acetylglutamate from glutamate and acetyl-CoA as the acetyl donor, and of ornithine by transacetylation between N(2)-acetylornithine and glutamate. This Streptococcus thermophilus (strain ATCC BAA-250 / LMG 18311) protein is Arginine biosynthesis bifunctional protein ArgJ.